A 483-amino-acid chain; its full sequence is tRNA sulfurtransferase (483 aa).

The THUMP domain occupies 61 to 165 (AEVLEILTTT…DELLNQVIAR (105 aa)). ATP contacts are provided by residues 183–184 (LI), Lys-265, Gly-287, and Gln-296. A disulfide bond links Cys-344 and Cys-457. One can recognise a Rhodanese domain in the interval 405 to 483 (EEGNAVVLDI…GFNNVKVYRP (79 aa)). Cys-457 serves as the catalytic Cysteine persulfide intermediate.

The protein belongs to the ThiI family.

It is found in the cytoplasm. It carries out the reaction [ThiI sulfur-carrier protein]-S-sulfanyl-L-cysteine + a uridine in tRNA + 2 reduced [2Fe-2S]-[ferredoxin] + ATP + H(+) = [ThiI sulfur-carrier protein]-L-cysteine + a 4-thiouridine in tRNA + 2 oxidized [2Fe-2S]-[ferredoxin] + AMP + diphosphate. The catalysed reaction is [ThiS sulfur-carrier protein]-C-terminal Gly-Gly-AMP + S-sulfanyl-L-cysteinyl-[cysteine desulfurase] + AH2 = [ThiS sulfur-carrier protein]-C-terminal-Gly-aminoethanethioate + L-cysteinyl-[cysteine desulfurase] + A + AMP + 2 H(+). It participates in cofactor biosynthesis; thiamine diphosphate biosynthesis. Its function is as follows. Catalyzes the ATP-dependent transfer of a sulfur to tRNA to produce 4-thiouridine in position 8 of tRNAs, which functions as a near-UV photosensor. Also catalyzes the transfer of sulfur to the sulfur carrier protein ThiS, forming ThiS-thiocarboxylate. This is a step in the synthesis of thiazole, in the thiamine biosynthesis pathway. The sulfur is donated as persulfide by IscS. In Vibrio cholerae serotype O1 (strain ATCC 39315 / El Tor Inaba N16961), this protein is tRNA sulfurtransferase.